Reading from the N-terminus, the 498-residue chain is Glycerol kinase (498 aa).

Residue T12 coordinates ADP. ATP-binding residues include T12, T13, and S14. A sn-glycerol 3-phosphate-binding site is contributed by T12. An ADP-binding site is contributed by R16. R82, E83, Y135, and D245 together coordinate sn-glycerol 3-phosphate. R82, E83, Y135, D245, and Q246 together coordinate glycerol. 2 residues coordinate ADP: T267 and G310. T267, G310, Q314, and G411 together coordinate ATP. Positions 411 and 415 each coordinate ADP.

This sequence belongs to the FGGY kinase family. In terms of assembly, homotetramer and homodimer (in equilibrium).

The enzyme catalyses glycerol + ATP = sn-glycerol 3-phosphate + ADP + H(+). The protein operates within polyol metabolism; glycerol degradation via glycerol kinase pathway; sn-glycerol 3-phosphate from glycerol: step 1/1. Its activity is regulated as follows. Activated by phosphorylation and inhibited by fructose 1,6-bisphosphate (FBP). Its function is as follows. Key enzyme in the regulation of glycerol uptake and metabolism. Catalyzes the phosphorylation of glycerol to yield sn-glycerol 3-phosphate. The chain is Glycerol kinase from Clostridium botulinum (strain Alaska E43 / Type E3).